A 421-amino-acid polypeptide reads, in one-letter code: AA11 family lytic polysaccharide monooxygenase (421 aa).

Residues 1–19 (MFSKAFLSAALLGAAAVEG) form the signal peptide. Cu(+) contacts are provided by H20, H79, and E93. Cystine bridges form between C48/C162, C84/C110, and C201/C235. A glycan (N-linked (GlcNAc...) asparagine) is linked at N117. The tract at residues 231-349 (GSQACTGTPT…SSSSSSSGAL (119 aa)) is disordered. Residues 247-285 (TAGSSGSSGSSSGSSSGGSSSSAAGSGATAPPAPAVSST) are compositionally biased toward low complexity. Residues 304 to 314 (SPAQPTHTSAP) are compositionally biased toward polar residues. Residues 315 to 349 (SGGSSSGSGSSSGSNSGSSSGSSSSSSSSSSSGAL) are compositionally biased toward low complexity.

It belongs to the polysaccharide monooxygenase AA11 family. The cofactor is Cu(2+).

Functionally, lytic polysaccharide monooxygenase (LPMO) that depolymerizes chitin via the oxidation of scissile beta-(1-4)-glycosidic bonds, yielding C1 or C4 oxidation products. Catalysis by LPMOs requires the reduction of the active-site copper from Cu(II) to Cu(I) by a reducing agent and H(2)O(2) or O(2) as a cosubstrate. Active on chitin but has no activity on other substrates, including diverse mannans, cellulose and starch (data not shown). Primary chain cleavage yields predominantly aldonic acid oligosaccharides with even-numbered degrees of polymerization. This is AA11 family lytic polysaccharide monooxygenase from Aspergillus oryzae (strain ATCC 42149 / RIB 40) (Yellow koji mold).